Consider the following 1506-residue polypeptide: MAKQGSKEKKGYPELKEVIKATCKIRVGPGKETLTEGNCLWALKTIDFIFEDLKTEPWTITKMYTVWDRLKGLTPEETSKREFASLQATLACIMCSQMGMKPETVQAAKGIISMKEGLQENKEAKGEKVEQLYPNLEKHREVYPIVNLQAGGRSWKAVESVVFQQLQTVAMQHGLVSEDFERQLAYYATTWTSKDILEVLAMMPGNRAQKELIQGKLNEEAERWVRQNPPGPNVLTVDQIMGVGQTNQQASQANMDQARQICRQWVITALRSVRHMSHRPGNPMLVKQKNTESYEDFIARLLEAIDAEPVTDPIKTYLKVTLSYTNASTDCQKQMDRTLGTRVQQATVEEKMQACRDVGSEGFKMQLLAQALRPQGKAGHKGVNQKCYNCGKPGHLARQCRQGIICHHCGKRGHMQKDCRQKKQQGKQQEGATCGAVRAPYVVTEAPPKIEIKVGTRWKKLLVDTGADKTIVTSHDMSGIPKGRIILQGIGGIIEGEKWEQVHLQYKDKIIRGTIVVLATSPVEVLGRDNMSELGIGLIMANLEEKKIPITEVRLKEGCKGPHIAQWPLTQEKLEGLKEIVDRLEKEGKVGRAPPHWTCNTPIFCIKKKSGKWRMLIDFRELNKQTEDLAEAQLGLPHPGGLQRKKHVTILDIGDAYFTIPLYEPYRQYTCFTMLSPNNLGPCVRYYWKVLPQGWKLSPSVYQFTMQKILRGWIEEHPMIQFGIYMDDIYIGSDLGLEEHRGIVNELASYIAQYGFMLPEDKRQEGYPAKWLGFELHPEKWKFQKHTLPEITEGPITLNKLQKLVGDLVWRQSLIGKSIPNILKLMEGDRALQSERYIESIHVREWEACRQKLKEMEGNYYDEEKDIYGQLDWGNKAIEYIVFQEKGKPLWVNVVHSIKNLSQAQQIIKAAQKLTQEVIIRTGKIPWILLPGREEDWILELQMGNINWMPSFWSCYKGSVRWKKRNVIAEVVSGPTYYTDGGKKNGRGSLGYIASTGEKFRIYEEGTNQQLELRAIEEACKQGPEKMNIVTDSRYAYEFMLRNWDEEVIRNPIQARIMELMHNKEKIGVHWVPGHKGIPQNEEIDRYISEIFLAKEGRGILQKRAEDAGYDLICPQEISIPAGQVKRIAIDLKINLKKDQWAMIGTKSSFANKGVFVQGGIIDSGYQGTIQVVIYNSNNKEVVIPQGRKFAQLILMPLIHEELEPWGETRKTERGEQGFGSTGMYWIENIPLAEEEHNKWHQDAVSLHLEFGIPRTAAEDIVQQCDVCQENKMPSTLRGSNKRGIDHWQVDYTHYEDKIILVWVETNSGLIYAERVKGETGQEFRVQTMKWYAMFAPKSLQSDNGPAFVAESTQLLMKYLGIEHTTGIPWNPQSQALVERTHQTLKNTLEKLIPMFNAFESALAGTLITLNIKRKGGLGTSPMDIFIFNKEQQRIQQQSKSKQEKIRFCYYRTRKRGHPGEWQGPTQVLWGGDGAIVVKDRGTDRYLVIANKDVKFIPPPKEIQKE.

2 consecutive CCHC-type zinc fingers follow at residues 385–402 (QKCY…QCRQ) and 404–421 (IICH…DCRQ). One can recognise a Peptidase A2 domain in the interval 459-530 (KKLLVDTGAD…SPVEVLGRDN (72 aa)). The active-site Protease; shared with dimeric partner is the Asp-464. The 190-residue stretch at 587–776 (EGKVGRAPPH…YPAKWLGFEL (190 aa)) folds into the Reverse transcriptase domain. 7 residues coordinate Mg(2+): Asp-652, Asp-727, Asp-728, Asp-980, Glu-1012, Asp-1032, and Asp-1085. The region spanning 971–1093 (VVSGPTYYTD…IDRYISEIFL (123 aa)) is the RNase H type-1 domain. An Integrase-type zinc finger spans residues 1228-1269 (ENIPLAEEEHNKWHQDAVSLHLEFGIPRTAAEDIVQQCDVCQ). Residues His-1237, His-1241, Cys-1265, and Cys-1268 each contribute to the Zn(2+) site. One can recognise an Integrase catalytic domain in the interval 1270 to 1430 (ENKMPSTLRG…SPMDIFIFNK (161 aa)). Residues Asp-1291, Asp-1343, and Glu-1379 each coordinate Mg(2+). A DNA-binding region (integrase-type) is located at residues 1447 to 1499 (RFCYYRTRKRGHPGEWQGPTQVLWGGDGAIVVKDRGTDRYLVIANKDVKFIPP).

The protein belongs to the retroviral Pol polyprotein family. As to quaternary structure, homotetramer; further associates as a homohexadecamer. It depends on Mg(2+) as a cofactor. Specific enzymatic cleavages by the viral protease yield mature proteins.

Its subcellular location is the virion. It carries out the reaction 3'-end directed exonucleolytic cleavage of viral RNA-DNA hybrid.. The enzyme catalyses dUTP + H2O = dUMP + diphosphate + H(+). It catalyses the reaction DNA(n) + a 2'-deoxyribonucleoside 5'-triphosphate = DNA(n+1) + diphosphate. The catalysed reaction is Endonucleolytic cleavage to 5'-phosphomonoester.. In terms of biological role, mediates, with Gag polyprotein, the essential events in virion assembly, including binding the plasma membrane, making the protein-protein interactions necessary to create spherical particles, recruiting the viral Env proteins, and packaging the genomic RNA via direct interactions with the RNA packaging sequence. Its function is as follows. Targets the polyprotein to the plasma membrane. Functionally, forms the core that encapsulates the genomic RNA-nucleocapsid complex in the virion. Encapsulates and protects viral dimeric unspliced genomic RNA (gRNA). Binds these RNAs through its zinc fingers. Acts as a nucleic acid chaperone which is involved in rearrangement of nucleic acid secondary structure during gRNA retrotranscription. Also facilitates template switch leading to recombination. In terms of biological role, the aspartyl protease mediates proteolytic cleavages of Gag and Gag-Pol polyproteins during or shortly after the release of the virion from the plasma membrane. Cleavages take place as an ordered, step-wise cascade to yield mature proteins. This process is called maturation. Displays maximal activity during the budding process just prior to particle release from the cell. Its function is as follows. RT is a multifunctional enzyme that converts the viral dimeric RNA genome into dsDNA in the cytoplasm, shortly after virus entry into the cell. This enzyme displays a DNA polymerase activity that can copy either DNA or RNA templates, and a ribonuclease H (RNase H) activity that cleaves the RNA strand of RNA-DNA heteroduplexes in a partially processive 3' to 5' endonucleasic mode. Conversion of viral genomic RNA into dsDNA requires many steps. A tRNA-Trp binds to the primer-binding site (PBS) situated at the 5' end of the viral RNA. RT uses the 3' end of the tRNA primer to perfom a short round of RNA-dependent minus-strand DNA synthesis. The reading proceeds through the U5 region and ends after the repeated (R) region which is present at both ends of viral RNA. The portion of the RNA-DNA heteroduplex is digested by the RNase H, resulting in a ssDNA product attached to the tRNA primer. This ssDNA/tRNA hybridizes with the identical R region situated at the 3' end of viral RNA. This template exchange, known as minus-strand DNA strong stop transfer, can be either intra- or intermolecular. RT uses the 3' end of this newly synthesized short ssDNA to perfom the RNA-dependent minus-strand DNA synthesis of the whole template. RNase H digests the RNA template except for a polypurine tract (PPT) situated at the 5' end of the genome. It is not clear if both polymerase and RNase H activities are simultaneous. RNase H probably can proceed both in a polymerase-dependent (RNA cut into small fragments by the same RT performing DNA synthesis) and a polymerase-independent mode (cleavage of remaining RNA fragments by free RTs). Secondly, RT performs DNA-directed plus-strand DNA synthesis using the PPT that has not been removed by RNase H as primers. PPT and tRNA primers are then removed by RNase H. The 3' and 5' ssDNA PBS regions hybridize to form a circular dsDNA intermediate. Strand displacement synthesis by RT to the PBS and PPT ends produces a blunt ended, linear dsDNA copy of the viral genome that includes long terminal repeats (LTRs) at both ends. Functionally, catalyzes viral DNA integration into the host chromosome, by performing a series of DNA cutting and joining reactions. The chain is Gag-Pol polyprotein (pol) from Maedi visna virus (strain 1514 / clone LV1-1KS1) (MVV).